The chain runs to 312 residues: Small ribosomal subunit protein RACK1 (312 aa).

WD repeat units follow at residues 9-42 (GHRG…ISWK), 63-93 (GHTG…RMWD), 105-135 (KHTK…RVWN), 148-180 (GHED…KVWN), 192-222 (GHSN…LLWD), 233-262 (NVES…SVYD), and 279-307 (PSEC…RVWS).

This sequence belongs to the WD repeat G protein beta family. Ribosomal protein RACK1 subfamily.

The sequence is that of Small ribosomal subunit protein RACK1 from Leishmania major.